Here is a 379-residue protein sequence, read N- to C-terminus: Cytochrome b (379 aa).

4 consecutive transmembrane segments (helical) span residues 33–53 (FGSLLGMCLVLQIFTGLFLAM), 77–98 (WLIRYMHANGASLFFICLYIHI), 113–133 (WNIGILLLFLTMATAFVGYVL), and 178–198 (FFAFHFILPFIIAALATVHLL). Positions 83 and 97 each coordinate heme b. Heme b contacts are provided by His-182 and His-196. His-201 contributes to the a ubiquinone binding site. Helical transmembrane passes span 226-246 (TKDFLGALIXIMFFMTLVLYF), 288-308 (LGGVVALILSILVLALLPYIH), 320-340 (ISQFLFWTLVSDLLLLTWIGG), and 347-367 (FIIIGQTASXMYFTIILIXMX).

Belongs to the cytochrome b family. The cytochrome bc1 complex contains 11 subunits: 3 respiratory subunits (MT-CYB, CYC1 and UQCRFS1), 2 core proteins (UQCRC1 and UQCRC2) and 6 low-molecular weight proteins (UQCRH/QCR6, UQCRB/QCR7, UQCRQ/QCR8, UQCR10/QCR9, UQCR11/QCR10 and a cleavage product of UQCRFS1). This cytochrome bc1 complex then forms a dimer. Heme b serves as cofactor.

The protein localises to the mitochondrion inner membrane. In terms of biological role, component of the ubiquinol-cytochrome c reductase complex (complex III or cytochrome b-c1 complex) that is part of the mitochondrial respiratory chain. The b-c1 complex mediates electron transfer from ubiquinol to cytochrome c. Contributes to the generation of a proton gradient across the mitochondrial membrane that is then used for ATP synthesis. This chain is Cytochrome b (MT-CYB), found in Thomomys umbrinus (Southern pocket gopher).